We begin with the raw amino-acid sequence, 792 residues long: MDPRVAWIQPEQKGPANALWMQIWETSQGVGRGGSGFASYFCLNSPALDTAAAAGAAGRGSGGLGPALPAASPPPPGPTAPAALPPALLTALGPAAEGARRLHKSPSLSSSSSSSSSNAESGTESPGCSSSSSSSASLGRPGGGRGGAFFNFADGAPSAPGTANGHPGPRGPAPAGSPSQHQFHPGRRKRENKASTYGLNYLLSGSRAAALSGGGGPGAQAPRPGTPWKSRAYSPGIQGLHEEIIDFYNFMSPCPEEAAMRREVVKRIETVVKDLWPTADVQIFGSFSTGLYLPTSDIDLVVFGKWERPPLQLLEQALRKHNVAEPCSIKVLDKATVPIIKLTDQETEVKVDISFNMETGVRAAEFIKNYMKKYSLLPYLILVLKQFLLQRDLNEVFTGGISSYSLILMAISFLQLHPRIDARRADENLGMLLVEFFELYGRNFNYLKTGIRIKEGGAYIAKEEIMKAMTSGYRPSMLCIEDPLLPGNDVGRSSYGAMQVKQVFDYAYIVLSHAVSPLARSYPNRDAESTLGRIIKVTQEVIDYRRWIKEKWGSKAHPSPGMDSRIKIKERIATCNGEQTQNREPESPYGQRLTLSLSSPQLLSSGSSASSVSSLSGSDVDSDTPPCTTPSVYQFSLQAPAPLMAGLPTALPMPSGKPQPTTSRTLIMTTNNQTRFTIPPPTLGVAPVPCRQAGVEGTASLKAVHHMSSPAIPSASPNPLSSPHLYHKQHNGMKLSMKGSHGHTQGGGYSSVGSGGVRPPVGNRGHHQYNRTGWRRKKHTHTRDSLPVSLSR.

The segment at 55–191 (GAAGRGSGGL…QFHPGRRKRE (137 aa)) is disordered. Composition is skewed to low complexity over residues 80–97 (APAA…PAAE) and 105–139 (SPSL…ASLG). The Mg(2+) site is built by Asp297 and Asp299. 4 residues coordinate ATP: Gly360, Lys385, Ser403, and Tyr404. Positions 428 to 486 (NLGMLLVEFFELYGRNFNYLKTGIRIKEGGAYIAKEEIMKAMTSGYRPSMLCIEDPLLP) constitute a PAP-associated domain. ATP-binding residues include Asn488 and Arg492. Over residues 601 to 619 (QLLSSGSSASSVSSLSGSD) the composition is skewed to low complexity. 2 disordered regions span residues 601 to 632 (QLLS…TPSV) and 737 to 792 (MKGS…SLSR). A compositionally biased stretch (gly residues) spans 744 to 756 (TQGGGYSSVGSGG). Residues 764–781 (RGHHQYNRTGWRRKKHTH) are compositionally biased toward basic residues.

It belongs to the DNA polymerase type-B-like family. Component of a nuclear TRAMP-like complex, an ATP-dependent exosome regulatory complex consisting of a helicase (MTREX), an oligadenylate polymerase (TENT4B or TENT4A), and a substrate specific RNA-binding factor (ZCCHC7 or ZCCHC8). Several TRAMP-like complexes exist with specific compositions and are associated with nuclear, or nucleolar RNA exosomes. Mg(2+) serves as cofactor. It depends on Mn(2+) as a cofactor.

The protein resides in the cytoplasm. It localises to the nucleus. The protein localises to the nucleoplasm. The enzyme catalyses RNA(n) + ATP = RNA(n)-3'-adenine ribonucleotide + diphosphate. Functionally, terminal nucleotidyltransferase that catalyzes preferentially the transfer of ATP and GTP on RNA 3' poly(A) tail creating a heterogeneous 3' poly(A) tail leading to mRNAs stabilization by protecting mRNAs from active deadenylation. Also functions as a catalytic subunit of a TRAMP-like complex which has a poly(A) RNA polymerase activity and is involved in a post-transcriptional quality control mechanism. Polyadenylation with short oligo(A) tails is required for the degradative activity of the exosome on several of its nuclear RNA substrates. Has no terminal uridylyltransferase activity, and does not play a role in replication-dependent histone mRNA degradation via uridylation. This chain is Terminal nucleotidyltransferase 4A, found in Homo sapiens (Human).